Reading from the N-terminus, the 723-residue chain is Enolase-phosphatase E1 (723 aa).

Substrate-binding positions include 126 to 127 (SS) and Lys-160. Residues 239–723 (GAGAKRKIDE…TPTPPIEAES (485 aa)) are disordered. Composition is skewed to basic and acidic residues over residues 262–284 (VKKD…DEPA) and 293–308 (AAKE…KMEV). The segment covering 311–320 (AAAAAAPPAD) has biased composition (low complexity). Composition is skewed to basic and acidic residues over residues 322 to 406 (AEEK…VVEE), 419 to 443 (AEEK…KPAE), 468 to 479 (EPAKEKPAEAEA), 487 to 496 (TKAEVVEKPA), 511 to 565 (SADK…KGEE), and 577 to 593 (VEAK…KSDA). 2 stretches are compositionally biased toward low complexity: residues 596–606 (VSTTTTTTSTE) and 636–647 (NGEAEPAAEAVV). Basic and acidic residues predominate over residues 653 to 666 (GKHEEKGDSDKEND).

This sequence belongs to the HAD-like hydrolase superfamily. MasA/MtnC family. As to quaternary structure, monomer.

Its subcellular location is the cytoplasm. The protein localises to the nucleus. It carries out the reaction 5-methylsulfanyl-2,3-dioxopentyl phosphate + H2O = 1,2-dihydroxy-5-(methylsulfanyl)pent-1-en-3-one + phosphate. The protein operates within amino-acid biosynthesis; L-methionine biosynthesis via salvage pathway; L-methionine from S-methyl-5-thio-alpha-D-ribose 1-phosphate: step 3/6. Its pathway is amino-acid biosynthesis; L-methionine biosynthesis via salvage pathway; L-methionine from S-methyl-5-thio-alpha-D-ribose 1-phosphate: step 4/6. In terms of biological role, bifunctional enzyme that catalyzes the enolization of 2,3-diketo-5-methylthiopentyl-1-phosphate (DK-MTP-1-P) into the intermediate 2-hydroxy-3-keto-5-methylthiopentenyl-1-phosphate (HK-MTPenyl-1-P), which is then dephosphorylated to form the acireductone 1,2-dihydroxy-3-keto-5-methylthiopentene (DHK-MTPene). This Culex quinquefasciatus (Southern house mosquito) protein is Enolase-phosphatase E1.